A 177-amino-acid chain; its full sequence is uncharacterized protein (177 aa).

The next 4 membrane-spanning stretches (helical) occupy residues 4 to 24, 33 to 53, 80 to 100, and 115 to 135; these read IIIL…GFIL, ILSI…LHWI, IAFI…GSFL, and MLGA…LLYV.

It localises to the cell membrane. This is an uncharacterized protein from Bacillus subtilis (strain 168).